The following is a 258-amino-acid chain: Putative gamma-secretase subunit APH-1C (258 aa).

Transmembrane regions (helical) follow at residues 5–25 (VFFG…LFTI), 32–52 (VIFL…SSMF), 71–91 (LLIF…LAYY), 116–136 (LLAY…SFVN), 161–181 (AFMT…FFDG), 187–207 (WYTL…TFLS), and 214–234 (LVTA…VAGG).

This sequence belongs to the APH-1 family. In terms of assembly, potential component of the gamma-secretase complex.

It localises to the membrane. Functionally, potential subunit of the gamma-secretase complex, an endoprotease complex that catalyzes the intramembrane cleavage of integral proteins such as Notch receptors and APP (amyloid-beta precursor protein). This chain is Putative gamma-secretase subunit APH-1C (Aph1c), found in Mus musculus (Mouse).